The following is an 840-amino-acid chain: Probable sulfate permease C869.05c (840 aa).

The next 12 membrane-spanning stretches (helical) occupy residues 120–140, 148–168, 173–193, 208–228, 230–250, 278–298, 315–335, 410–430, 447–467, 470–490, 505–525, and 527–547; these read WLIN…PQGM, LPSE…CFFA, VSIG…ANVM, LALL…GFII, FIPV…ILSG, LPDT…LFFT, AFFL…TAIS, LIAM…PATG, IAGI…TDAF, IPNA…ILPM, CIFF…GIYV, and VCLA…SFLG. The 156-residue stretch at 578–733 folds into the STAS domain; it reads NLEIQSPPPG…CVEVAAPLRD (156 aa). Residue Ser-823 is modified to Phosphoserine.

Belongs to the SLC26A/SulP transporter (TC 2.A.53) family.

It localises to the membrane. High affinity uptake of sulfate into the cell. The chain is Probable sulfate permease C869.05c from Schizosaccharomyces pombe (strain 972 / ATCC 24843) (Fission yeast).